The following is a 453-amino-acid chain: MNKLSVVILAAGKGTRMYSDLPKVLHKIAGKPMVKHVIDTAKKLSAAQIHLIYGHGADLLKQHLADEPVNWVFQSEQLGTGHAMQQAVPFFQDDENIVMLYGDVPLISKETLECLISQKPENGIALLTVNLDNPTGYGRVIRENGTVTAIVEQKDANPEQLKITEVNTGVMVSDGASFRKWLARLDNNNAQGEYYMTDVIGLANQDGFKVVAVQAKDLMEVEGVNNRLQLANLERHYQRKQVEKLLLAGVTFADPARFDLRGELTHGKDVEIDINVIIEGTVRLGNNVFIGAGCVLKNCTIADNVEIKPYSVIEDAIVGNNAKIGPFSRLRPGAELSENTHVGNFVEIKKAQIGKGSKVNHLTYIGDAEVGHHCNIGAGVITCNYDGANKFKTLIGDNVFVGSDSQLVAPLTIASGATIGAGTTVTKDVQENELVITRVPQRHISNWQRPKRK.

The interval 1–227 (MNKLSVVILA…LMEVEGVNNR (227 aa)) is pyrophosphorylase. Residues 9 to 12 (LAAG), Lys-23, Gln-74, 79 to 80 (GT), 101 to 103 (YGD), Gly-138, Glu-152, Asn-167, and Asn-225 each bind UDP-N-acetyl-alpha-D-glucosamine. Asp-103 is a Mg(2+) binding site. Asn-225 provides a ligand contact to Mg(2+). Residues 228–248 (LQLANLERHYQRKQVEKLLLA) are linker. Residues 249–453 (GVTFADPARF…ISNWQRPKRK (205 aa)) are N-acetyltransferase. Residues Arg-331 and Lys-349 each coordinate UDP-N-acetyl-alpha-D-glucosamine. His-361 functions as the Proton acceptor in the catalytic mechanism. Tyr-364 and Asn-375 together coordinate UDP-N-acetyl-alpha-D-glucosamine. Acetyl-CoA is bound by residues Ala-378, 384–385 (NY), Ser-403, Ala-421, and Arg-438.

This sequence in the N-terminal section; belongs to the N-acetylglucosamine-1-phosphate uridyltransferase family. The protein in the C-terminal section; belongs to the transferase hexapeptide repeat family. In terms of assembly, homotrimer. The cofactor is Mg(2+).

The protein resides in the cytoplasm. The enzyme catalyses alpha-D-glucosamine 1-phosphate + acetyl-CoA = N-acetyl-alpha-D-glucosamine 1-phosphate + CoA + H(+). It carries out the reaction N-acetyl-alpha-D-glucosamine 1-phosphate + UTP + H(+) = UDP-N-acetyl-alpha-D-glucosamine + diphosphate. The protein operates within nucleotide-sugar biosynthesis; UDP-N-acetyl-alpha-D-glucosamine biosynthesis; N-acetyl-alpha-D-glucosamine 1-phosphate from alpha-D-glucosamine 6-phosphate (route II): step 2/2. It participates in nucleotide-sugar biosynthesis; UDP-N-acetyl-alpha-D-glucosamine biosynthesis; UDP-N-acetyl-alpha-D-glucosamine from N-acetyl-alpha-D-glucosamine 1-phosphate: step 1/1. It functions in the pathway bacterial outer membrane biogenesis; LPS lipid A biosynthesis. In terms of biological role, catalyzes the last two sequential reactions in the de novo biosynthetic pathway for UDP-N-acetylglucosamine (UDP-GlcNAc). The C-terminal domain catalyzes the transfer of acetyl group from acetyl coenzyme A to glucosamine-1-phosphate (GlcN-1-P) to produce N-acetylglucosamine-1-phosphate (GlcNAc-1-P), which is converted into UDP-GlcNAc by the transfer of uridine 5-monophosphate (from uridine 5-triphosphate), a reaction catalyzed by the N-terminal domain. This Histophilus somni (strain 2336) (Haemophilus somnus) protein is Bifunctional protein GlmU.